We begin with the raw amino-acid sequence, 374 residues long: Chaperone protein DnaJ (374 aa).

The J domain maps to 5–70; that stretch reads DYYEVLGVER…NKRAAYDQYG (66 aa). The segment at 133–211 adopts a CR-type zinc-finger fold; the sequence is GTSVNIRVPT…CHGEGRVEEY (79 aa). 8 residues coordinate Zn(2+): Cys-146, Cys-149, Cys-163, Cys-166, Cys-185, Cys-188, Cys-199, and Cys-202. CXXCXGXG motif repeat units lie at residues 146–153, 163–170, 185–192, and 199–206; these read CKPCDGSG, CPTCGGIG, CPRCHGQG, and CDSCHGEG.

The protein belongs to the DnaJ family. In terms of assembly, homodimer. Requires Zn(2+) as cofactor.

It is found in the cytoplasm. Functionally, participates actively in the response to hyperosmotic and heat shock by preventing the aggregation of stress-denatured proteins and by disaggregating proteins, also in an autonomous, DnaK-independent fashion. Unfolded proteins bind initially to DnaJ; upon interaction with the DnaJ-bound protein, DnaK hydrolyzes its bound ATP, resulting in the formation of a stable complex. GrpE releases ADP from DnaK; ATP binding to DnaK triggers the release of the substrate protein, thus completing the reaction cycle. Several rounds of ATP-dependent interactions between DnaJ, DnaK and GrpE are required for fully efficient folding. Also involved, together with DnaK and GrpE, in the DNA replication of plasmids through activation of initiation proteins. This is Chaperone protein DnaJ from Pseudomonas fluorescens (strain SBW25).